The sequence spans 767 residues: MSGDHLHNDSQIEADFRLNDSHKHKDKHKDREHRHKEHKKDKEKDREKSKHSNSEHKDSEKKHKEKEKTKHKDGSSEKHKDKHKDRDKEKRKEEKIRASGDAKIKKEKENGFSSPPRIKDEPDDDGYFAPPKEDIKPLKRPRDEDDADYKPKKIKTEDIKKEKKRKLEEEEDGKLKKTKNKDKDKKGAESDNKKKKPKKEEEQKWKWWEEERYPEGIKWKFLEHKGPVFAPPYEPLPEGVKFYYDGKVMKLSPKAEEVATFFAKMLDHEYTTKEIFRKNFFKDWRKEMTNDEKNVITNLSKCDFTQMSQYFKDQSEARKQMSKEEKLKIKEENEKLLKEYGFCVMDNHRERIANFKIEPPGLFRGRGNHPKMGMLKRRIMPEDIIINCSKDAKVPSPPPGHKWKEVRHDNKVTWLVSWTENIQGSIKYIMLNPSSRIKGEKDWQKYETARRLKKCVDKIRNQYREDWKSKEMKVRQRAVALYFIDKLALRAGNEKEEGETADTVSCCSLRVEHINLHPELDGQEYVVEFDFPGKDSIRYYNKVPVEKRVFKNLQLFMENKQPEDDLFDRLNTGILNKHLQDLMEGLTAKVFRTYNASITLQQQLKELTAPDENVPAKILSYNRANRAVAILCNHQRAPPKTFEKSMMNLQSKIDAKKDQLADARRDLKSAKADAKVMKDAKTKKVVESKKKAVQRLEEQLMKLEVQATDREENKQIALGTSKLNYLDPRITVAWCKKWGVPIEKIYNKTQREKFAWAIDMTDEDYEF.

Residues 1 to 23 (MSGDHLHNDSQIEADFRLNDSHK) show a composition bias toward basic and acidic residues. The tract at residues 1–201 (MSGDHLHNDS…NKKKKPKKEE (201 aa)) is disordered. Residue S2 is modified to N-acetylserine. Residues S2 and S10 each carry the phosphoserine modification. Positions 24 to 39 (HKDKHKDREHRHKEHK) are enriched in basic residues. The span at 40-110 (KDKEKDREKS…DAKIKKEKEN (71 aa)) shows a compositional bias: basic and acidic residues. S59 is modified (phosphoserine). K103 is covalently cross-linked (Glycyl lysine isopeptide (Lys-Gly) (interchain with G-Cter in SUMO2)). K105 participates in a covalent cross-link: Glycyl lysine isopeptide (Lys-Gly) (interchain with G-Cter in SUMO); alternate. Residue K105 forms a Glycyl lysine isopeptide (Lys-Gly) (interchain with G-Cter in SUMO2); alternate linkage. The residue at position 114 (S114) is a Phosphoserine. A Glycyl lysine isopeptide (Lys-Gly) (interchain with G-Cter in SUMO); alternate cross-link involves residue K119. K119 participates in a covalent cross-link: Glycyl lysine isopeptide (Lys-Gly) (interchain with G-Cter in SUMO2); alternate. K119 participates in a covalent cross-link: Glycyl lysine isopeptide (Lys-Gly) (interchain with G-Cter in SUMO1); alternate. Positions 131–168 (PKEDIKPLKRPRDEDDADYKPKKIKTEDIKKEKKRKLE) are enriched in basic and acidic residues. Residues K136 and K150 each participate in a glycyl lysine isopeptide (Lys-Gly) (interchain with G-Cter in SUMO2) cross-link. K155 is covalently cross-linked (Glycyl lysine isopeptide (Lys-Gly) (interchain with G-Cter in SUMO); alternate). K155 participates in a covalent cross-link: Glycyl lysine isopeptide (Lys-Gly) (interchain with G-Cter in SUMO2); alternate. Glycyl lysine isopeptide (Lys-Gly) (interchain with G-Cter in SUMO2) cross-links involve residues K160 and K166. K174 is covalently cross-linked (Glycyl lysine isopeptide (Lys-Gly) (interchain with G-Cter in SUMO2); alternate). Position 174 is an N6-acetyllysine; alternate (K174). A compositionally biased stretch (basic and acidic residues) spans 181 to 201 (KDKDKKGAESDNKKKKPKKEE). K206 participates in a covalent cross-link: Glycyl lysine isopeptide (Lys-Gly) (interchain with G-Cter in SUMO2). At K282 the chain carries N6-acetyllysine. K338 participates in a covalent cross-link: Glycyl lysine isopeptide (Lys-Gly) (interchain with G-Cter in SUMO2). Interaction with DNA regions lie at residues 427–428 (KY) and 490–495 (RAGNEK). The Topo IB-type catalytic domain maps to 434–767 (SSRIKGEKDW…IDMTDEDYEF (334 aa)). S508 carries the post-translational modification Phosphoserine; by CK2. A Glycyl lysine isopeptide (Lys-Gly) (interchain with G-Cter in SUMO2) cross-link involves residue K551. The segment at 587–589 (TAK) is interaction with DNA. Residues K644, K702, and K714 each participate in a glycyl lysine isopeptide (Lys-Gly) (interchain with G-Cter in SUMO2) cross-link. The O-(3'-phospho-DNA)-tyrosine intermediate role is filled by Y725.

Belongs to the type IB topoisomerase family. In terms of assembly, monomer. Interacts with ERCC6. Interacts with TPRN; TPRN interacts with a number of DNA damage response proteins, is recruited to sites of DNA damage and may play a role in DNA damage repair. Sumoylated. Lys-119 is the main site of sumoylation. Sumoylation plays a role in partitioning TOP1 between nucleoli and nucleoplasm. Levels are dramatically increased on camptothecin (CPT) treatment. In terms of processing, phosphorylation at Ser-508 by CK2 increases binding to supercoiled DNA and sensitivity to camptothecin.

The protein localises to the nucleus. It localises to the nucleolus. Its subcellular location is the nucleoplasm. The enzyme catalyses ATP-independent breakage of single-stranded DNA, followed by passage and rejoining.. With respect to regulation, specifically inhibited by camptothecin (CPT), a plant alkaloid with antitumor activity. Functionally, releases the supercoiling and torsional tension of DNA introduced during the DNA replication and transcription by transiently cleaving and rejoining one strand of the DNA duplex. Introduces a single-strand break via transesterification at a target site in duplex DNA. The scissile phosphodiester is attacked by the catalytic tyrosine of the enzyme, resulting in the formation of a DNA-(3'-phosphotyrosyl)-enzyme intermediate and the expulsion of a 5'-OH DNA strand. The free DNA strand then rotates around the intact phosphodiester bond on the opposing strand, thus removing DNA supercoils. Finally, in the religation step, the DNA 5'-OH attacks the covalent intermediate to expel the active-site tyrosine and restore the DNA phosphodiester backbone. Regulates the alternative splicing of tissue factor (F3) pre-mRNA in endothelial cells. Involved in the circadian transcription of the core circadian clock component BMAL1 by altering the chromatin structure around the ROR response elements (ROREs) on the BMAL1 promoter. This Cricetulus griseus (Chinese hamster) protein is DNA topoisomerase 1 (TOP1).